The primary structure comprises 358 residues: Bis(monoacylglycero)phosphate synthase CLN5 (358 aa).

A disordered region spans residues 1 to 23 (MAQVGSAGPGACGRRGAGAGAGP). Topologically, residues 1-29 (MAQVGSAGPGACGRRGAGAGAGPERTTWR) are cytoplasmic. Residues 7–21 (AGPGACGRRGAGAGA) are compositionally biased toward gly residues. Residues 30–46 (WAPALLWLATAAAVAGD) form a helical; Signal-anchor for type II membrane protein membrane-spanning segment. At 47 to 358 (PSRRQWPVPY…NRKNRTLSGL (312 aa)) the chain is on the lumenal side. Cystine bridges form between C69–C158 and C76–C164. H116 functions as the Proton acceptor in the catalytic mechanism. N-linked (GlcNAc...) asparagine glycosylation is found at N129, N142, N177, and N202. C230 functions as the Nucleophile; Acyl-thioester intermediate in the catalytic mechanism. N254, N270, and N280 each carry an N-linked (GlcNAc...) asparagine glycan. The segment at 303–342 (FLLSLLQIFDAVVIHREFYLFYNFEYWFLPMKYPFIKITY) is membrane-anchoring. N352 carries an N-linked (GlcNAc...) asparagine glycan.

It belongs to the CLN5 family. In terms of assembly, multimer. Interacts with SORT1, RAB5A and RAB7A. Interacts with PPT1, TPP1, CLN3, CLN6, CLN8, ATP5F1A and ATP5F1B. Post-translationally, N-glycosylated with both high mannose and complex type sugars. Glycosylation is important for proper folding and trafficking to the lysosomes. In terms of processing, the type II membrane signal anchor is proteolytically cleaved to produce a mature form that is transported to the lysosomes (Bis(monoacylglycero)phosphate synthase CLN5, secreted form). Can undergo proteolytic cleavage at the C-terminus, probably by a cysteine protease and may involve the removal of approximately 10-15 residues from the C-terminal end.

It localises to the lysosome. Its subcellular location is the membrane. It catalyses the reaction S-hexadecanoyl-L-cysteinyl-[protein] + H2O = L-cysteinyl-[protein] + hexadecanoate + H(+). It carries out the reaction 2 1-acyl-sn-glycero-3-phospho-(1'-sn-glycerol) = 1-acyl-sn-glycero-3-phospho-(3'-acyl-sn-1'-glycerol) + sn-glycero-3-phospho-(1'-sn-glycerol). The enzyme catalyses 2 1-(9Z-octadecenoyl)-sn-glycero-3-phospho-(1'-sn-glycerol) = 1-(9Z-octadecenoyl)-sn-glycero-3-phospho-(3'-(9Z-octadecenoyl)-1'-sn-glycerol) + sn-glycero-3-phospho-(1'-sn-glycerol). The catalysed reaction is 2 1-octadecanoyl-sn-glycero-3-phospho-(1'-sn-glycerol) = 1-octadecanoyl-sn-glycero-3-phospho-(3'-octadecanoyl-1'-sn-glycerol) + sn-glycero-3-phospho-(1'-sn-glycerol). It catalyses the reaction 2 1-hexadecanoyl-sn-glycero-3-phospho-(1'-sn-glycerol) = 1-hexadecanoyl-sn-glycero-3-phospho-(3'-hexadecanoyl-1'-sn-glycerol) + sn-glycero-3-phospho-(1'-sn-glycerol). It carries out the reaction 2 1-tetradecanoyl-sn-glycero-3-phospho-(1'-sn-glycerol) = 1-tetradecanoyl-sn-glycero-3-phospho-(3'-tetradecanoyl-1'-sn-glycerol) + sn-glycero-3-phospho-(1'-sn-glycerol). In terms of biological role, catalyzes the synthesis of bis(monoacylglycero)phosphate (BMP) via transacylation of 2 molecules of lysophosphatidylglycerol (LPG). BMP also known as lysobisphosphatidic acid plays a key role in the formation of intraluminal vesicles and in maintaining intracellular cholesterol homeostasis. Can use only LPG as the exclusive lysophospholipid acyl donor for base exchange and displays BMP synthase activity towards various LPGs (LPG 14:0, LPG 16:0, LPG 18:0, LPG 18:1) with a higher preference for longer chain lengths. Plays a role in influencing the retrograde trafficking of lysosomal sorting receptors SORT1 and IGF2R from the endosomes to the trans-Golgi network by controlling the recruitment of retromer complex to the endosomal membrane. Regulates the localization and activation of RAB7A which is required to recruit the retromer complex to the endosomal membrane. Exhibits palmitoyl protein thioesterase (S-depalmitoylation) activity in vitro and most likely plays a role in protein S-depalmitoylation. This Bos taurus (Bovine) protein is Bis(monoacylglycero)phosphate synthase CLN5 (CLN5).